Reading from the N-terminus, the 214-residue chain is Uracil phosphoribosyltransferase (214 aa).

5-phospho-alpha-D-ribose 1-diphosphate is bound by residues Arg-81, Arg-106, and 133–141 (DPMLATGNS). Uracil-binding positions include Ile-196 and 201–203 (GDA). Asp-202 is a binding site for 5-phospho-alpha-D-ribose 1-diphosphate.

This sequence belongs to the UPRTase family. Mg(2+) is required as a cofactor.

It carries out the reaction UMP + diphosphate = 5-phospho-alpha-D-ribose 1-diphosphate + uracil. It participates in pyrimidine metabolism; UMP biosynthesis via salvage pathway; UMP from uracil: step 1/1. Its activity is regulated as follows. Allosterically activated by GTP. Functionally, catalyzes the conversion of uracil and 5-phospho-alpha-D-ribose 1-diphosphate (PRPP) to UMP and diphosphate. This chain is Uracil phosphoribosyltransferase, found in Legionella pneumophila (strain Paris).